Here is a 283-residue protein sequence, read N- to C-terminus: Putative aquaporin NIP4-1 (283 aa).

Met1 is subject to N-acetylmethionine. The next 2 membrane-spanning stretches (helical) occupy residues 45–65 (LIAEMIGTYFIVFSGCGVVVV) and 70–90 (GGTITFPGICVTWGLIVMVMI). Positions 102–104 (NPA) match the NPA 1 motif. Transmembrane regions (helical) follow at residues 122-142 (LYIGAQFAGSLLASLTLRLMF), 161-181 (ALVAEIIISFLLMFVISGVAT), and 189-209 (LAGIAVGMTIMVNVFVAGPIS). The NPA 2 signature appears at 214-216 (NPA). Residues 231-251 (IWVYIVGPVLGVISGGFVYNL) form a helical membrane-spanning segment. Phosphoserine is present on Ser267.

The protein belongs to the MIP/aquaporin (TC 1.A.8) family. NIP (TC 1.A.8.12) subfamily.

It is found in the membrane. In terms of biological role, potential aquaporin, which may facilitate the transport of water and small neutral solutes across cell membranes. The chain is Putative aquaporin NIP4-1 (NIP4-1) from Arabidopsis thaliana (Mouse-ear cress).